Here is a 633-residue protein sequence, read N- to C-terminus: Proline-rich receptor-like protein kinase PERK4 (633 aa).

Low complexity predominate over residues 1–29 (MASSPESAPPTNSTSSPSPPSNTNSTTSS). Residues 1–145 (MASSPESAPP…GSSGGGGGGR (145 aa)) form a disordered region. The Extracellular portion of the chain corresponds to 1 to 151 (MASSPESAPP…GGGRSNTNTA (151 aa)). 2 N-linked (GlcNAc...) asparagine glycosylation sites follow: asparagine 12 and asparagine 24. 2 stretches are compositionally biased toward pro residues: residues 30–41 (PPAPSPPSPTPP) and 48–65 (SPPP…PNPP). A glycan (N-linked (GlcNAc...) asparagine) is linked at asparagine 66. Positions 77–90 (QGGGGERGNGGNNG) are enriched in gly residues. The span at 106–135 (SRSNGDNGGSRSSPPGDTGGSRSDNPPSSG) shows a compositional bias: low complexity. A compositionally biased stretch (gly residues) spans 136 to 145 (GSSGGGGGGR). A helical transmembrane segment spans residues 152 to 172 (IIVGVLVGAGLLMIVLIIVCL). Residues 173–633 (RRKKKRKDSF…MGTKSPTPPK (461 aa)) lie on the Cytoplasmic side of the membrane. Over residues 193-222 (QYYGNNNNNNASQNYPNWHLNSQGQNQQST) the composition is skewed to low complexity. The tract at residues 193-255 (QYYGNNNNNN…SMYSGPSRPV (63 aa)) is disordered. Threonine 273 carries the phosphothreonine modification. In terms of domain architecture, Protein kinase spans 284–562 (FTDANLLGQG…VRALEGEVSL (279 aa)). ATP is bound by residues 290-298 (LGQGGFGYV) and lysine 312. Tyrosine 357 carries the post-translational modification Phosphotyrosine. The Proton acceptor role is filled by aspartate 408. Serine 441 bears the Phosphoserine mark. Residues threonine 442 and threonine 447 each carry the phosphothreonine modification. A Phosphotyrosine modification is found at tyrosine 455. Positions 608–619 (FPVSDCEGTSSN) are enriched in polar residues. The interval 608-633 (FPVSDCEGTSSNDSRDMGTKSPTPPK) is disordered.

The protein belongs to the protein kinase superfamily. Ser/Thr protein kinase family. In terms of tissue distribution, mostly expressed in inflorescence bolts. Also present in roots, stems, germinated seeds, cotyledons, pollen, stamen and stigma.

The protein localises to the cell membrane. The enzyme catalyses L-seryl-[protein] + ATP = O-phospho-L-seryl-[protein] + ADP + H(+). The catalysed reaction is L-threonyl-[protein] + ATP = O-phospho-L-threonyl-[protein] + ADP + H(+). With respect to regulation, activated by ABA and Ca(2+). Its function is as follows. Required during abscisic acid (ABA)-mediated activation of Ca(2+) channels. Regulates ABA signaling pathways. Modulates the expression of genes related to cell elongation and ABA signaling during root growth. The chain is Proline-rich receptor-like protein kinase PERK4 (PERK4) from Arabidopsis thaliana (Mouse-ear cress).